Reading from the N-terminus, the 361-residue chain is D-alanine--D-alanine ligase (361 aa).

Positions 139–336 constitute an ATP-grasp domain; that stretch reads KLLLKEKEIS…FSQIIDNMIN (198 aa). 167–222 contributes to the ATP binding site; the sequence is EKNLGYPMIVKPARLGSSIGVSKVVDRKNFEEAVKNVLLFDNKVLVEKWINAREIN. Mg(2+)-binding residues include aspartate 296, glutamate 307, and asparagine 309.

Belongs to the D-alanine--D-alanine ligase family. It depends on Mg(2+) as a cofactor. The cofactor is Mn(2+).

Its subcellular location is the cytoplasm. It catalyses the reaction 2 D-alanine + ATP = D-alanyl-D-alanine + ADP + phosphate + H(+). The protein operates within cell wall biogenesis; peptidoglycan biosynthesis. Its function is as follows. Cell wall formation. The protein is D-alanine--D-alanine ligase of Thermosipho melanesiensis (strain DSM 12029 / CIP 104789 / BI429).